We begin with the raw amino-acid sequence, 212 residues long: 3,4-dihydroxy-2-butanone 4-phosphate synthase (212 aa).

D-ribulose 5-phosphate-binding positions include 37-38, Asp42, 150-154, and Glu174; these read RE and RRGHT. Glu38 is a binding site for Mg(2+). His153 contacts Mg(2+).

The protein belongs to the DHBP synthase family. Homodimer. Mg(2+) serves as cofactor. The cofactor is Mn(2+).

The enzyme catalyses D-ribulose 5-phosphate = (2S)-2-hydroxy-3-oxobutyl phosphate + formate + H(+). The protein operates within cofactor biosynthesis; riboflavin biosynthesis; 2-hydroxy-3-oxobutyl phosphate from D-ribulose 5-phosphate: step 1/1. Catalyzes the conversion of D-ribulose 5-phosphate to formate and 3,4-dihydroxy-2-butanone 4-phosphate. In Shewanella pealeana (strain ATCC 700345 / ANG-SQ1), this protein is 3,4-dihydroxy-2-butanone 4-phosphate synthase.